We begin with the raw amino-acid sequence, 364 residues long: Dihydroorotate dehydrogenase (quinone) (364 aa).

FMN-binding positions include 62–66 (AGFDK) and Thr-86. A substrate-binding site is contributed by Lys-66. 111–115 (NRMGF) is a substrate binding site. Positions 142 and 175 each coordinate FMN. Asn-175 contacts substrate. Ser-178 serves as the catalytic Nucleophile. Residue Asn-180 participates in substrate binding. 2 residues coordinate FMN: Lys-216 and Thr-244. 245–246 (NT) contributes to the substrate binding site. FMN is bound by residues Gly-267, Gly-296, and 317–318 (YT).

It belongs to the dihydroorotate dehydrogenase family. Type 2 subfamily. As to quaternary structure, monomer. Requires FMN as cofactor.

It is found in the cell membrane. It catalyses the reaction (S)-dihydroorotate + a quinone = orotate + a quinol. It participates in pyrimidine metabolism; UMP biosynthesis via de novo pathway; orotate from (S)-dihydroorotate (quinone route): step 1/1. Functionally, catalyzes the conversion of dihydroorotate to orotate with quinone as electron acceptor. In Anaeromyxobacter dehalogenans (strain 2CP-1 / ATCC BAA-258), this protein is Dihydroorotate dehydrogenase (quinone).